The chain runs to 198 residues: MRQFVIIGHDAPTTPEFSLDDLAGAAGRLDVLCRCVTSAFFLSHAIREDVRVHLILGDEYTVTFEGSDLRRLNPDERSTAALIRKALEEREEAIGHIPVETSPGVSLTRRGFEGTLDDVARRGTVVQLHEDGDPIVGVAPPSDPVFVLSDHHDFRDEEAALLADRADERVSLGPKALHADHSITVAHNYLDTAGFERY.

Position 128 (L128) interacts with S-adenosyl-L-methionine.

The protein belongs to the methyltransferase superfamily. TrmY family. In terms of assembly, homodimer.

The protein localises to the cytoplasm. The catalysed reaction is pseudouridine(54) in tRNA + S-adenosyl-L-methionine = N(1)-methylpseudouridine(54) in tRNA + S-adenosyl-L-homocysteine + H(+). Functionally, specifically catalyzes the N1-methylation of pseudouridine at position 54 (Psi54) in tRNAs. The sequence is that of tRNA (pseudouridine(54)-N(1))-methyltransferase from Haloarcula marismortui (strain ATCC 43049 / DSM 3752 / JCM 8966 / VKM B-1809) (Halobacterium marismortui).